Consider the following 291-residue polypeptide: Probable ABC transporter permease protein PH1038 (291 aa).

The next 8 membrane-spanning stretches (helical) occupy residues 7–27 (PFFF…YPVF), 75–95 (IVWI…FALL), 106–126 (IIKS…GLII), 133–153 (GAGV…AITW), 160–180 (ALFS…MLMY), 208–228 (FVIW…TLLW), 232–252 (IFDI…MVLA), and 267–287 (YAAV…LWLI). One can recognise an ABC transmembrane type-1 domain in the interval 71-286 (LIHNIVWIAI…ALTFIPALWL (216 aa)).

It belongs to the binding-protein-dependent transport system permease family. MalFG subfamily.

It localises to the cell membrane. Functionally, probably part of a binding-protein-dependent transport system PH1036/38/39. Probably responsible for the translocation of the substrate across the membrane. The protein is Probable ABC transporter permease protein PH1038 of Pyrococcus horikoshii (strain ATCC 700860 / DSM 12428 / JCM 9974 / NBRC 100139 / OT-3).